The chain runs to 95 residues: Small ribosomal subunit protein bS6 (95 aa).

Belongs to the bacterial ribosomal protein bS6 family.

Binds together with bS18 to 16S ribosomal RNA. The sequence is that of Small ribosomal subunit protein bS6 from Bacillus cytotoxicus (strain DSM 22905 / CIP 110041 / 391-98 / NVH 391-98).